Consider the following 114-residue polypeptide: Mediator of RNA polymerase II transcription subunit 11 (114 aa).

Residues 28 to 61 (LELSKEKANASLLDRQLNQFQTSINRVESELSSQ) are a coiled coil.

The protein belongs to the Mediator complex subunit 11 family. In terms of assembly, component of the Mediator complex. Ubiquitously expressed at early stage of development. After fertilization expressed in head region as well as in lateral line primordium.

The protein resides in the nucleus. In terms of biological role, component of the Mediator complex, a coactivator involved in the regulated transcription of nearly all RNA polymerase II-dependent genes. Mediator functions as a bridge to convey information from gene-specific regulatory proteins to the basal RNA polymerase II transcription machinery. Mediator is recruited to promoters by direct interactions with regulatory proteins and serves as a scaffold for the assembly of a functional pre-initiation complex with RNA polymerase II and the general transcription factors. The polypeptide is Mediator of RNA polymerase II transcription subunit 11 (med11) (Danio rerio (Zebrafish)).